A 102-amino-acid chain; its full sequence is MDVVARLASQRAVVIFSKSTCCMSHAIKRLFYEQGVSPAIVEIDQDMYGKDIEWALARLGCSPTVPAVFVGGKFVGTANTVMTLHLNGSLKILLKEAGALWL.

The region spanning 1–101 (MDVVARLASQ…ILLKEAGALW (101 aa)) is the Glutaredoxin domain. [2Fe-2S] cluster is bound at residue Cys-21. A Responsive for interaction with TGA factors motif is present at residues 99–102 (ALWL).

This sequence belongs to the glutaredoxin family. CC-type subfamily.

It localises to the cytoplasm. It is found in the nucleus. Its function is as follows. May only reduce GSH-thiol disulfides, but not protein disulfides. In Arabidopsis thaliana (Mouse-ear cress), this protein is Monothiol glutaredoxin-S10 (GRXS10).